The sequence spans 430 residues: Alpha-humulene synthase asR6 (430 aa).

It belongs to the terpene synthase family. Alpha-humulene synthase eupE subfamily. It depends on Mg(2+) as a cofactor.

The catalysed reaction is (2E,6E)-farnesyl diphosphate = alpha-humulene + diphosphate. It participates in secondary metabolite biosynthesis; terpenoid biosynthesis. Functionally, alpha-humulene synthase; part of the gene cluster that mediates the biosynthesis of xenovulene A, an unusual meroterpenoid that has potent inhibitory effects on the human gamma-aminobutyrate A (GABAA) benzodiazepine receptor. The first step of xenovulene A biosynthesis is the biosynthesis of 3-methylorcinaldehyde performed by the non-reducing polyketide synthase aspks1. The salicylate hydroxylase asL1 then catalyzes the oxidative dearomatization of 3-methylorcinaldehyde to yield a dearomatized hydroxycyclohexadione. The 2-oxoglutarate-dependent dioxygenase asL3 further catalyzes the oxidative ring expansion to provide the first tropolone metabolite. The cytochrome P450 monooxygenase asR2 allows the synthesis of tropolone hemiacetal. In parallel, a previously unrecognised class of terpene cyclase, asR6, produces alpha-humulene from farnesylpyrophosphate (FPP). The putative Diels-Alderase asR5 probably catalyzes the formation of the tropolone-humulene skeleton by linking humulene and the polyketide moiety. Oxidative-ring contractions catalyzed by asL4 and asL6 then processively remove carbon atoms from the polyketide to yield xenovulene A. The sequence is that of Alpha-humulene synthase asR6 from Sarocladium schorii (Acremonium strictum (strain IMI 501407)).